Consider the following 343-residue polypeptide: Ferredoxin--NADP reductase (343 aa).

Residues Asp31, Lys39, Tyr43, Val83, Ile118, Asp285, and Ser326 each coordinate FAD.

Belongs to the ferredoxin--NADP reductase type 2 family. In terms of assembly, homodimer. The cofactor is FAD.

It carries out the reaction 2 reduced [2Fe-2S]-[ferredoxin] + NADP(+) + H(+) = 2 oxidized [2Fe-2S]-[ferredoxin] + NADPH. The chain is Ferredoxin--NADP reductase from Staphylococcus saprophyticus subsp. saprophyticus (strain ATCC 15305 / DSM 20229 / NCIMB 8711 / NCTC 7292 / S-41).